A 377-amino-acid chain; its full sequence is Peptidyl-prolyl cis-trans isomerase D (377 aa).

The PPIase cyclophilin-type domain occupies 11 to 178 (YFDIQIGSQK…TDVTIVDCGE (168 aa)). TPR repeat units follow at residues 220–253 (ASEL…LNEF), 273–306 (FTLH…ADAA), and 314–347 (AKAY…APGD).

Belongs to the cyclophilin-type PPIase family. PPIase D subfamily.

It is found in the cytoplasm. It carries out the reaction [protein]-peptidylproline (omega=180) = [protein]-peptidylproline (omega=0). Functionally, PPIases accelerate the folding of proteins. It catalyzes the cis-trans isomerization of proline imidic peptide bonds in oligopeptides. The sequence is that of Peptidyl-prolyl cis-trans isomerase D (cpr6) from Aspergillus fumigatus (strain ATCC MYA-4609 / CBS 101355 / FGSC A1100 / Af293) (Neosartorya fumigata).